The primary structure comprises 656 residues: Protein O1 homolog (656 aa).

The chain crosses the membrane as a helical span at residues 544–564 (FIKKVILANVIFEYIFTLIII).

Belongs to the chordopoxvirinae O1 family.

The protein resides in the membrane. The chain is Protein O1 homolog from Vertebrata (FPV).